Reading from the N-terminus, the 303-residue chain is Bifunctional protein FolD (303 aa).

Residues 175-177 (GVS) and Ile243 contribute to the NADP(+) site.

This sequence belongs to the tetrahydrofolate dehydrogenase/cyclohydrolase family. Homodimer.

The enzyme catalyses (6R)-5,10-methylene-5,6,7,8-tetrahydrofolate + NADP(+) = (6R)-5,10-methenyltetrahydrofolate + NADPH. The catalysed reaction is (6R)-5,10-methenyltetrahydrofolate + H2O = (6R)-10-formyltetrahydrofolate + H(+). It functions in the pathway one-carbon metabolism; tetrahydrofolate interconversion. Catalyzes the oxidation of 5,10-methylenetetrahydrofolate to 5,10-methenyltetrahydrofolate and then the hydrolysis of 5,10-methenyltetrahydrofolate to 10-formyltetrahydrofolate. This is Bifunctional protein FolD from Xanthomonas oryzae pv. oryzae (strain PXO99A).